The primary structure comprises 200 residues: Inducible T-cell costimulator (200 aa).

The first 20 residues, M1 to G20, serve as a signal peptide directing secretion. Topologically, residues E21 to P145 are extracellular. In terms of domain architecture, Ig-like V-type spans M30 to E133. Cystine bridges form between C42/C109 and C63/C83. 2 N-linked (GlcNAc...) asparagine glycosylation sites follow: N89 and N123. A helical transmembrane segment spans residues V146–A166. Topologically, residues K167–S200 are cytoplasmic.

In terms of assembly, homodimer; disulfide-linked. Interacts with ICOSLG. Interacts with PIK3R1. Interacts with TBK1; this interaction is critical for the maturation of T follicular regulatory cells. N-glycosylated. In terms of tissue distribution, strongly expressed in the spleen and lung. Lower expression seen in liver, kidney and testis.

It localises to the cell membrane. Stimulatory receptor expressed in activated or antigen-experienced T-cells that plays an important role in the immune response. Upon binding to its ligand ICOSL expressed on antigen presenting cells (APCs), delivers costimulatory signals that enhances all basic T-cell responses to a foreign antigen, namely proliferation, secretion of lymphokines including IL10, up-regulation of molecules that mediate cell-cell interaction, and effective help for antibody secretion by B-cells. Also acts as a costimulatory receptor critical for the differentiation of T follicular regulatory cells upon immune challenges such as viral infection. Mechanistically, potentiates TCR-induced calcium flux by augmenting PLCG1 activation and actin remodeling. In addition, activates PI3K signaling pathways independently of calcium flux. Essential both for efficient interaction between T and B-cells and for normal antibody responses to T-cell dependent antigens. Prevents the apoptosis of pre-activated T-cells. Plays a critical role in CD40-mediated class switching of immunoglobin isotypes. The chain is Inducible T-cell costimulator (Icos) from Rattus norvegicus (Rat).